We begin with the raw amino-acid sequence, 1272 residues long: Protein diaphanous homolog 1 (1272 aa).

Position 1 is an N-acetylmethionine (Met1). Residues 1-12 (MEPPGGSLGPGR) are compositionally biased toward gly residues. Residues 1-84 (MEPPGGSLGP…YGDDPTAQSL (84 aa)) form a disordered region. Phosphoserine occurs at positions 7, 22, and 36. The span at 44–65 (LMADELERFTSMRIKKEKEKPN) shows a compositional bias: basic and acidic residues. Positions 67-84 (AHRNSSASYGDDPTAQSL) are enriched in polar residues. Residues 84–449 (LQDVSDEQVL…QIVLHKNGAD (366 aa)) form the GBD/FH3 domain. Residues 468–572 (MIDKTKVEKS…ASLSAAAITV (105 aa)) are a coiled coil. The interval 573-755 (PPSVPSRAPV…GMPPPPPFGF (183 aa)) is disordered. Composition is skewed to pro residues over residues 574-589 (PSVP…PPLP), 596-622 (IPPP…PPLP), and 640-658 (SPPP…PPLP). Residues 583–764 (PPAPPLPGDS…FGVPAAPVLP (182 aa)) enclose the FH1 domain. The span at 659–674 (EGVGIPSPSSLPGGTA) shows a compositional bias: low complexity. Positions 675-753 (IPPPPPLPGS…GMGMPPPPPF (79 aa)) are enriched in pro residues. Thr768 carries the post-translational modification Phosphothreonine. The FH2 domain maps to 769–1171 (PKKLYKPEVQ…MRRAKLAKEK (403 aa)). Residues 1039–1196 (DELAHVEKAS…IDMNAEGDET (158 aa)) are a coiled coil. Residues Lys1057 and Lys1103 each carry the N6-acetyllysine modification. Tyr1121 is modified (phosphotyrosine). Positions 1194 to 1222 (DETGVMDSLLEALQSGAAFRRKRGPRQAN) constitute a DAD domain. Phosphoserine is present on residues Ser1251 and Ser1254.

This sequence belongs to the formin homology family. Diaphanous subfamily. In terms of assembly, homodimer. Interacts with the GTP-bound form of RHOA. Interacts with RHOC, PFY1, MAPRE1 and BAIAP2. Interacts with APC; acts as a scaffold protein for MAPRE1 and APC to stabilize microtubules and promote cell migration. Interacts with SCAI. Interacts with DCAF7, via FH2 domain. Interacts with NCDN. Interacts with OSBPL10, OSBPL2, VIM, TUBB and DYN1. Post-translationally, phosphorylation at Thr-768 is stimulated by cAMP and regulates stability, complex formation and mitochondrial movement. Expressed in brain, heart, placenta, lung, kidney, pancreas, liver, skeletal muscle and cochlea. Expressed in platelets.

Its subcellular location is the cell membrane. It localises to the cell projection. The protein localises to the ruffle membrane. The protein resides in the cytoplasm. It is found in the cytoskeleton. Its subcellular location is the microtubule organizing center. It localises to the centrosome. The protein localises to the spindle. The protein resides in the nucleus. Its function is as follows. Actin nucleation and elongation factor required for the assembly of F-actin structures, such as actin cables and stress fibers. Binds to the barbed end of the actin filament and slows down actin polymerization and depolymerization. Required for cytokinesis, and transcriptional activation of the serum response factor. DFR proteins couple Rho and Src tyrosine kinase during signaling and the regulation of actin dynamics. Functions as a scaffold protein for MAPRE1 and APC to stabilize microtubules and promote cell migration. Has neurite outgrowth promoting activity. Acts in a Rho-dependent manner to recruit PFY1 to the membrane. In hear cells, it may play a role in the regulation of actin polymerization in hair cells. The MEMO1-RHOA-DIAPH1 signaling pathway plays an important role in ERBB2-dependent stabilization of microtubules at the cell cortex. It controls the localization of APC and CLASP2 to the cell membrane, via the regulation of GSK3B activity. In turn, membrane-bound APC allows the localization of the MACF1 to the cell membrane, which is required for microtubule capture and stabilization. Plays a role in the regulation of cell morphology and cytoskeletal organization. Required in the control of cell shape. Plays a role in brain development. Also acts as an actin nucleation and elongation factor in the nucleus by promoting nuclear actin polymerization inside the nucleus to drive serum-dependent SRF-MRTFA activity. In Homo sapiens (Human), this protein is Protein diaphanous homolog 1 (DIAPH1).